The primary structure comprises 1032 residues: tRNA wybutosine-synthesizing protein 4 (1032 aa).

S-adenosyl-L-methionine is bound by residues Arg69, Gly95, Asp122, 169–170, and Glu196; that span reads DL. The disordered stretch occupies residues 702–726; the sequence is ESVEPNKSQSEKATSKPSAQSQNEP. The segment covering 716–725 has biased composition (polar residues); that stretch reads SKPSAQSQNE. One can recognise a JmjC domain in the interval 833-988; that stretch reads PTKLPANLAV…AAGRDVYGNR (156 aa).

This sequence belongs to the methyltransferase superfamily. LCMT family.

The enzyme catalyses 7-[(3S)-3-amino-3-carboxypropyl]wyosine(37) in tRNA(Phe) + S-adenosyl-L-methionine = 7-[(3S)-(3-amino-3-methoxycarbonyl)propyl]wyosine(37) in tRNA(Phe) + S-adenosyl-L-homocysteine. The catalysed reaction is 7-[(3S)-(3-amino-3-methoxycarbonyl)propyl]wyosine(37) in tRNA(Phe) + S-adenosyl-L-methionine + CO2 = wybutosine(37) in tRNA(Phe) + S-adenosyl-L-homocysteine + 2 H(+). It functions in the pathway tRNA modification; wybutosine-tRNA(Phe) biosynthesis. In terms of biological role, probable S-adenosyl-L-methionine-dependent methyltransferase that acts as a component of the wybutosine biosynthesis pathway. Wybutosine is a hyper modified guanosine with a tricyclic base found at the 3'-position adjacent to the anticodon of eukaryotic phenylalanine tRNA. May methylate the carboxyl group of leucine residues to form alpha-leucine ester residues. This chain is tRNA wybutosine-synthesizing protein 4 (ppm2), found in Aspergillus oryzae (strain ATCC 42149 / RIB 40) (Yellow koji mold).